The sequence spans 436 residues: Adenylosuccinate synthetase (436 aa).

GTP-binding positions include 12-18 and 40-42; these read GDEGKGK and GHT. The Proton acceptor role is filled by D13. Residues D13 and G40 each contribute to the Mg(2+) site. Residues 13-16, 38-41, T128, R142, Q223, T238, and R302 contribute to the IMP site; these read DEGK and NAGH. H41 serves as the catalytic Proton donor. 298 to 304 is a binding site for substrate; sequence TTTGRRR. Residues R304, 330 to 332, and 412 to 414 contribute to the GTP site; these read KLD and SLG.

The protein belongs to the adenylosuccinate synthetase family. As to quaternary structure, homodimer. Mg(2+) is required as a cofactor.

The protein localises to the cytoplasm. It catalyses the reaction IMP + L-aspartate + GTP = N(6)-(1,2-dicarboxyethyl)-AMP + GDP + phosphate + 2 H(+). It participates in purine metabolism; AMP biosynthesis via de novo pathway; AMP from IMP: step 1/2. Plays an important role in the de novo pathway of purine nucleotide biosynthesis. Catalyzes the first committed step in the biosynthesis of AMP from IMP. This is Adenylosuccinate synthetase from Prochlorococcus marinus (strain MIT 9515).